A 365-amino-acid chain; its full sequence is Serine/threonine-protein phosphatase 2A activator 1 (365 aa).

Residues 321-349 (YEAPSETSEKPAAGTAHTTTTTMPPPRMT) form a disordered region. Over residues 331-342 (PAAGTAHTTTTT) the composition is skewed to low complexity.

It belongs to the PTPA-type PPIase family.

The protein localises to the cytoplasm. The protein resides in the nucleus. It catalyses the reaction [protein]-peptidylproline (omega=180) = [protein]-peptidylproline (omega=0). Its function is as follows. PPIases accelerate the folding of proteins. It catalyzes the cis-trans isomerization of proline imidic peptide bonds in oligopeptides. Acts as a regulatory subunit for PP2A-like phosphatases modulating their activity or substrate specificity, probably by inducing a conformational change in the catalytic subunit, a direct target of the PPIase. Can reactivate inactive phosphatase PP2A-phosphatase methylesterase complexes (PP2Ai) in presence of ATP and Mg(2+) by dissociating the inactive form from the complex. The polypeptide is Serine/threonine-protein phosphatase 2A activator 1 (RRD1) (Eremothecium gossypii (strain ATCC 10895 / CBS 109.51 / FGSC 9923 / NRRL Y-1056) (Yeast)).